The primary structure comprises 126 residues: Probable small nuclear ribonucleoprotein Sm D1 (126 aa).

The Sm domain maps to K2–L74. The interval R86–R126 is disordered. Over residues G99 to R126 the composition is skewed to basic residues.

The protein belongs to the snRNP core protein family.

It is found in the nucleus. The protein resides in the cytoplasm. It localises to the cytosol. In terms of biological role, plays a role in pre-mRNA splicing as a core component of the spliceosomal U1, U2, U4 and U5 small nuclear ribonucleoproteins (snRNPs), the building blocks of the spliceosome. The sequence is that of Probable small nuclear ribonucleoprotein Sm D1 (snr-3) from Caenorhabditis elegans.